Consider the following 405-residue polypeptide: Indoleamine 2,3-dioxygenase acdA (405 aa).

Heme is bound at residue His312.

It belongs to the indoleamine 2,3-dioxygenase family. It depends on heme as a cofactor.

The catalysed reaction is L-tryptophan + O2 = N-formyl-L-kynurenine. It functions in the pathway secondary metabolite biosynthesis. Its function is as follows. Indoleamine 2,3-dioxygenase; part of the gene cluster that mediates the biosynthesis of aspcandine, a pyrrolobenzazepine alkaloid. Initially, the indoleamine 2,3-dioxygenase acdA accepts L-tryptophan and performs the oxidative opening of the indole ring to yield N'-formyl-L-kynurenine, which undergoes the spontaneous deformylation reaction to provide L-kynurenine. The kynurenine 3-monooxygenase acdD then hydroxylates L-kynurenine to afford 3-hydroxy-L-kynurenine. 3-hydroxy-L-kynurenine is activated by the A domain of the NRPS-PKS acdB and subsequently loaded onto the enzyme. The KS domain conducts the decarboxylative condensation of the 3-hydroxy-L-kynurenyl and malonyl moieties, and subsequent nucleophilic attacks by the two amino groups would occur nonenzymatically at two distinct positions, achieving the chain release and the construction of the tricyclic system. Finally, a dehydration reaction completes the biosynthesis to yield aspcandine. This chain is Indoleamine 2,3-dioxygenase acdA, found in Aspergillus candidus.